The primary structure comprises 67 residues: Epsilon-conotoxin TxVA (67 aa).

The first 19 residues, 1–19 (MRCFPVFIILLLLIASAPC), serve as a signal peptide directing secretion. A propeptide spanning residues 20-50 (FDARTKTDDDVPLSSLRDNLKRTIRTRLNIR) is cleaved from the precursor. A 4-carboxyglutamate mark is found at glutamate 51 and glutamate 54. Intrachain disulfides connect cysteine 52-cysteine 58 and cysteine 53-cysteine 59. A 6'-bromotryptophan modification is found at tryptophan 57. O-linked (GalNAc...) threonine glycosylation occurs at threonine 60. Proline 63 is subject to 4-hydroxyproline. A propeptide spanning residues 64-67 (LTGR) is cleaved from the precursor.

O-glycan consists of the disaccharide Gal-GalNAc. As to expression, expressed by the venom duct.

The protein resides in the secreted. In terms of biological role, epsilon-conotoxins act at presynaptic membranes, blocking the calcium channels or G protein-coupled receptors. Causes hyperactivity upon intracranial injection into mice. Causes dorsal fins drooping in fish. In Conus textile (Cloth-of-gold cone), this protein is Epsilon-conotoxin TxVA.